Here is a 136-residue protein sequence, read N- to C-terminus: Ribonuclease P protein component (136 aa).

The protein belongs to the RnpA family. In terms of assembly, consists of a catalytic RNA component (M1 or rnpB) and a protein subunit.

The enzyme catalyses Endonucleolytic cleavage of RNA, removing 5'-extranucleotides from tRNA precursor.. In terms of biological role, RNaseP catalyzes the removal of the 5'-leader sequence from pre-tRNA to produce the mature 5'-terminus. It can also cleave other RNA substrates such as 4.5S RNA. The protein component plays an auxiliary but essential role in vivo by binding to the 5'-leader sequence and broadening the substrate specificity of the ribozyme. In Burkholderia pseudomallei (strain 1106a), this protein is Ribonuclease P protein component.